The following is an 861-amino-acid chain: DNA mismatch repair protein MutS (861 aa).

Position 617-624 (617-624 (GPNMGGKS)) interacts with ATP. The segment at 799-822 (ETTSLPHEQPPAAKAKDAPQVPHQ) is disordered. Low complexity predominate over residues 808–820 (PPAAKAKDAPQVP).

The protein belongs to the DNA mismatch repair MutS family.

This protein is involved in the repair of mismatches in DNA. It is possible that it carries out the mismatch recognition step. This protein has a weak ATPase activity. This is DNA mismatch repair protein MutS from Pseudomonas putida (strain GB-1).